A 148-amino-acid chain; its full sequence is Receptor activity-modifying protein 1 (148 aa).

The signal sequence occupies residues 1–26 (MARALCRLPRRGLWLLLAHHLFMTTA). Intrachain disulfides connect cysteine 27/cysteine 82, cysteine 40/cysteine 72, and cysteine 57/cysteine 104. Residues 27–118 (CQEANYGALL…RAVRDPPGSI (92 aa)) are Extracellular-facing. The helical transmembrane segment at 119–140 (LYPFIVVPITVTLLVTALVVWQ) threads the bilayer. Residues 141–148 (SKRTEGIV) are Cytoplasmic-facing.

This sequence belongs to the RAMP family. As to quaternary structure, heterodimer of CALCRL and RAMP1; the interaction induces allosteric modulation of CALCRL function and CGRP1/CALCA and CGRP2/CALCB ligand specificity. Heterodimer of CALCR and RAMP1; interaction forms the AMYR1 receptor complex for amylin/IAPP and CGRP1/CALCA ligands. In terms of tissue distribution, expressed in many tissues including the uterus, bladder, brain, pancreas and gastro-intestinal tract.

It is found in the cell membrane. Functionally, accessory protein that interacts with and modulates the function of G-protein coupled receptors including calcitonin gene-related peptide type 1 receptor (CALCRL) and calcitonin receptor (CALCR). Required for the transport of CALCRL to the plasma membrane. Together with CALCRL, form the receptor complex for the calcitonin gene-related peptides CGRP1/CALCA and CGRP2/CALCB. Together with CALCR, form the AMYR1 receptor complex for amylin/IAPP and CGRP1/CALCA. The sequence is that of Receptor activity-modifying protein 1 from Homo sapiens (Human).